The sequence spans 411 residues: ATP-dependent RNA helicase eIF4A (411 aa).

Residues 1–23 (MSKPEDTSAAAAAPAGEAGNNLN) are disordered. A compositionally biased stretch (low complexity) spans 9 to 19 (AAAAAPAGEAG). The short motif at 38-66 (DNFDNMELKEELLRGVYAYGFERPSAIQA) is the Q motif element. In terms of domain architecture, Helicase ATP-binding spans 69 to 239 (IVPVIKGHDV…KKFMRDPIRI (171 aa)). 82–89 (AQSGTGKT) contacts ATP. The DEAD box signature appears at 187–190 (DEAD). The 162-residue stretch at 250–411 (GIKQFYVAVE…EMPLNVADLI (162 aa)) folds into the Helicase C-terminal domain.

It belongs to the DEAD box helicase family. eIF4A subfamily. As to quaternary structure, component of the eIF4F complex, which composition varies with external and internal environmental conditions. It is composed of at least eIF4A, eIF4E and eIF4G.

Its subcellular location is the cytoplasm. It carries out the reaction ATP + H2O = ADP + phosphate + H(+). Its function is as follows. ATP-dependent RNA helicase which is a subunit of the eIF4F complex involved in cap recognition and is required for mRNA binding to ribosome. In the current model of translation initiation, eIF4A unwinds RNA secondary structures in the 5'-UTR of mRNAs which is necessary to allow efficient binding of the small ribosomal subunit, and subsequent scanning for the initiator codon. This Mycosarcoma maydis (Corn smut fungus) protein is ATP-dependent RNA helicase eIF4A (TIF1).